A 569-amino-acid polypeptide reads, in one-letter code: Phospholipase B-like protein D (569 aa).

The first 22 residues, 1–22, serve as a signal peptide directing secretion; sequence MIIFKNLLKLLIILLTIKLYFC. 5 N-linked (GlcNAc...) asparagine glycosylation sites follow: Asn-93, Asn-126, Asn-181, Asn-425, and Asn-430.

Belongs to the phospholipase B-like family.

It is found in the secreted. Its function is as follows. Probable phospholipase. The protein is Phospholipase B-like protein D (plbD) of Dictyostelium discoideum (Social amoeba).